A 453-amino-acid polypeptide reads, in one-letter code: MLTCFKAYDIRGKLGEELNEDIAWRIGRAYGEFLKPKTIVLGGDVRLTSETLKLALAKGLQDAGVDVLDIGMSGTEEIYFATFHLGVDGGIEVTASHNPMDYNGMKLVREGARPISGDTGLRDVQRLAEANDFPPVDETKRGRYQQINLRDAYVDHLFGYINVKNLTPLKLVINSGNGAAGPVVDAIEARFKALGAPVELIKVHNTPDGNFPNGIPNPLLPECRDDTRNAVIKHGADMGIAFDGDFDRCFLFDEKGQFIEGYYIVGLLAEAFLEKNPGAKIIHDPRLSWNTVDVVTAAGTPVMSKTGHAFIKERMRKEDAIYGGEMSAHHYFRDFAYCDTGMIPWLLVAELVCLKGKTLGELVRDRMAAFPASGEINSKLAHPVEAINRVEQHFSRDAGGGSHRWHQHDLCRLAALTCASSNTEPVVRLNVESRGDVPLMEEKTKLILELLNK.

Ser-96 functions as the Phosphoserine intermediate in the catalytic mechanism. Positions 96, 243, 245, and 247 each coordinate Mg(2+).

It belongs to the phosphohexose mutase family. Requires Mg(2+) as cofactor.

The catalysed reaction is alpha-D-mannose 1-phosphate = D-mannose 6-phosphate. It functions in the pathway nucleotide-sugar biosynthesis; GDP-alpha-D-mannose biosynthesis; alpha-D-mannose 1-phosphate from D-fructose 6-phosphate: step 2/2. Its pathway is bacterial outer membrane biogenesis; LPS O-antigen biosynthesis. Its function is as follows. Involved in GDP-mannose biosynthesis which serves as the activated sugar nucleotide precursor for mannose residues in cell surface polysaccharides. This enzyme participates in synthesis of the LPS O7 antigen. In Escherichia coli, this protein is Phosphomannomutase (manB).